The following is a 1148-amino-acid chain: MSGSFTESFADDGKLLLCVAENGHSFEFQCSETTSVESVMRFVESVSGIALSDQLLLSLDMKLEPQKLLSAFGLPASDREVFVFNKAMLQSNSHPPSPEDVDLQDVADALPPASLHEHHPLDDASDPALKALPLYERQFRYHFHKGRTIYNCTVVKHENCERLTREQKVQQRAVEVATRNLEQYYRVIYQNFLEFMKRYKHQHRLHSDLLMNFGRDIEKLRSAKIHPYLQTESRKCLLDFVKEDNLKKAVENCASSHRQFENKIAQFQQMFVEVKRKVEELFACRASLSMKNLEVTVKDHERFIDEEKSIMQSLSKDVNTVKKLVDDCMSSQVSSSLRPHDAVSALGPMYEVHDKNHLPKMQACYNSISELLDFCKNKKNEMNNFVHGYMQKITYVTYIIKDAKLQFPVFREAMVRQDDLFADLKLVRGVGPAYRACLAEVVRRKASMKLYMGMAGQLAEKLAMKRETEVRKREEFLKTHGPFVPRDVLASMGLYDTPTQCDVNVAPYDTSLLNIEISDVDRYAPEFLVGLHSKIASLKSSLTMSGDSSLSAEPEEIGIDTFDKDNFDDILAASELIEIAGTSKMEVENAKLKADLASAISRICSLGPQFEYEVLDESEVENVLKNAADKTAEALQAKDEYEKHLLLMLKEKQMHCDSYEKRIRELEQRLSDEYLQGQRHNNKDVSGLNLMHEKVSEYKAEASSDVEGNKTHVSGSEPMDEVSCVSNLTSKQPCKAREGMDENMVDSSQVLSQPLDSSMLESQQNNEKGGKDSEAGEMGVFLSNSSTAESPQKSLDDNVATGRGLDAKDSGDIILELRNELMEKSNKLSEMESKLNGAMEEVSNLSRELETNQKLLEESQMNCAHLENCLHEAREEAQTHLCAADRRASQYTALRASAVKMRGLFERFRSSVCAGSGIADFADSLRTLAQALANSVNENEDDGTTEFRKCIRVLADKVSFLSKHREELLEKCQNLEATSEQTRKDLEEKKELVKTLYTKHQLGKQANKEKISFGRLEVHEIAAFVLNQAGHYEAINRNCPNYYLSSESEALFTDHLPSRPTYIVGQIVHIERQIVKLPSQLSASASPEAGKTHHLCSDQGSRTLASSSISTSTSATTTSNPYGLSSGCEYFIVTIAMLPDTAIHQQAS.

Positions 567 to 570 (FDDI) match the AIM (Atg8-family-interacting motif) motif. Positions 699 to 710 (KAEASSDVEGNK) are enriched in basic and acidic residues. Disordered stretches follow at residues 699–727 (KAEA…CVSN), 754–777 (PLDS…EAGE), and 784–803 (NSST…ATGR). 2 stretches are compositionally biased toward polar residues: residues 754 to 767 (PLDS…QNNE) and 784 to 793 (NSSTAESPQK). 2 coiled-coil regions span residues 816–868 (ELRN…HLEN) and 956–996 (DKVS…VKTL). T851 carries the phosphothreonine modification. The short motif at 1130–1133 (YFIV) is the AIM (Atg8-family-interacting motif) element.

It belongs to the ATG11 family. In terms of assembly, homodimer. Interacts with ATG8E, ATG13A and ATG101. Binds to ATG8E on autophagic vesicles.

It is found in the cytoplasmic vesicle. Its subcellular location is the autophagosome. Its function is as follows. Accessory protein involved in autophagy. Acts as a scaffold protein of the ATG1-ATG13 complex for faithful delivery of autophagic vesicles to the vacuole. Involved in the stress-induced phosphorylation of ATG1A for turnover of ATG1-ATG13 complex and proper ATG1-ATG13 complex assembly or activity. Required for selective mitophagy. Required for senescence-induced breakdown of mitochondria-resident proteins and mitochondrial vesicles. Seems not essential for ATG8-mediated autophagy. The polypeptide is Autophagy-related protein 11 (Arabidopsis thaliana (Mouse-ear cress)).